A 233-amino-acid chain; its full sequence is 5'-methylthioadenosine/S-adenosylhomocysteine nucleosidase (233 aa).

The active-site Proton acceptor is the Glu-12. Residues Gly-78, Ile-156, and 177–178 contribute to the substrate site; that span reads ME. The Proton donor role is filled by Asp-201.

The protein belongs to the PNP/UDP phosphorylase family. MtnN subfamily.

It catalyses the reaction S-adenosyl-L-homocysteine + H2O = S-(5-deoxy-D-ribos-5-yl)-L-homocysteine + adenine. The enzyme catalyses S-methyl-5'-thioadenosine + H2O = 5-(methylsulfanyl)-D-ribose + adenine. The catalysed reaction is 5'-deoxyadenosine + H2O = 5-deoxy-D-ribose + adenine. It functions in the pathway amino-acid biosynthesis; L-methionine biosynthesis via salvage pathway; S-methyl-5-thio-alpha-D-ribose 1-phosphate from S-methyl-5'-thioadenosine (hydrolase route): step 1/2. In terms of biological role, catalyzes the irreversible cleavage of the glycosidic bond in both 5'-methylthioadenosine (MTA) and S-adenosylhomocysteine (SAH/AdoHcy) to adenine and the corresponding thioribose, 5'-methylthioribose and S-ribosylhomocysteine, respectively. Also cleaves 5'-deoxyadenosine, a toxic by-product of radical S-adenosylmethionine (SAM) enzymes, into 5-deoxyribose and adenine. The sequence is that of 5'-methylthioadenosine/S-adenosylhomocysteine nucleosidase from Listeria monocytogenes serovar 1/2a (strain ATCC BAA-679 / EGD-e).